The following is a 360-amino-acid chain: Mannose-1-phosphate guanylyltransferase catalytic subunit beta (360 aa).

A substrate-binding domain region spans residues lysine 2 to proline 222. Residue aspartate 110 coordinates GDP-alpha-D-mannose. Aspartate 110 lines the Mg(2+) pocket. Lysine 162 is a catalytic residue. Residue aspartate 218 coordinates GDP-alpha-D-mannose. Aspartate 218 provides a ligand contact to Mg(2+). The segment at histidine 245–methionine 360 is hexapeptide repeat domain.

It belongs to the transferase hexapeptide repeat family. In terms of assembly, component of the GMPPA-GMPPB mannose-1-phosphate guanylyltransferase complex composed of 4 gmppa subunits and 8 gmppb subunits; the complex is organized into three layers, a central layer made up of 2 gmppa dimers sandwiched between two layers each made up of 2 gmppb dimers. Catalytic activity of gmppb is reduced when part of the complex and binding of GDP-alpha-D-Mannose by gmppa induces allosteric feedback inhibition of gmppb. It depends on Mg(2+) as a cofactor.

The enzyme catalyses alpha-D-mannose 1-phosphate + GTP + H(+) = GDP-alpha-D-mannose + diphosphate. It functions in the pathway nucleotide-sugar biosynthesis; GDP-alpha-D-mannose biosynthesis; GDP-alpha-D-mannose from alpha-D-mannose 1-phosphate (GTP route): step 1/1. With respect to regulation, enzyme activity is reduced by incorporation into the GMPPA-GMPPB mannose-1-phosphate guanylyltransferase complex. Allosterically inhibited, when part of the GMPPA-GMPPB complex, by GDP-alpha-D-mannose binding to GMPPA. In terms of biological role, catalytic subunit of the GMPPA-GMPPB mannose-1-phosphate guanylyltransferase complex. Catalyzes the formation of GDP-mannose, an essential precursor of glycan moieties of glycoproteins and glycolipids. Can catalyze the reverse reaction in vitro. Together with GMPPA regulates GDP-alpha-D-mannose levels. This chain is Mannose-1-phosphate guanylyltransferase catalytic subunit beta (gmppb), found in Xenopus tropicalis (Western clawed frog).